The following is a 500-amino-acid chain: Protein farnesyltransferase subunit beta (500 aa).

The tract at residues 117 to 140 (LQNDDNNGNNNNRENNQNGGGFGG) is disordered. A compositionally biased stretch (low complexity) spans 119–133 (NDDNNGNNNNRENNQ). 5 PFTB repeats span residues 121 to 162 (DNNG…YVIG), 172 to 213 (REAM…SMLN), 220 to 261 (ERGV…SILN), 268 to 309 (MNSL…IIIQ), and 343 to 384 (QEYV…SLSQ). (2E,6E)-farnesyl diphosphate-binding positions include 246 to 249 (HGGY) and 288 to 291 (RTNK). 2 residues coordinate Zn(2+): aspartate 294 and cysteine 296. 297–300 (YSYW) serves as a coordination point for (2E,6E)-farnesyl diphosphate. Residue histidine 372 coordinates Zn(2+). A disordered region spans residues 402-451 (FEQPSPPINKKSTNVFTISNNNNNNNNKNNNSDDNNNNSNNNNNNSENQL). A compositionally biased stretch (low complexity) spans 420–449 (SNNNNNNNNKNNNSDDNNNNSNNNNNNSEN).

It belongs to the protein prenyltransferase subunit beta family. In terms of assembly, heterodimer of fntA and fntB (farnesyltransferase). Heterodimer of an alpha and a beta subunit. The cofactor is Zn(2+).

The catalysed reaction is L-cysteinyl-[protein] + (2E,6E)-farnesyl diphosphate = S-(2E,6E)-farnesyl-L-cysteinyl-[protein] + diphosphate. Its function is as follows. Catalyzes the transfer of a farnesyl moiety from farnesyl diphosphate to a cysteine at the fourth position from the C-terminus of several proteins. The beta subunit is responsible for peptide-binding. In Dictyostelium discoideum (Social amoeba), this protein is Protein farnesyltransferase subunit beta (fntB).